Here is a 59-residue protein sequence, read N- to C-terminus: uncharacterized protein (59 aa).

Residues 1–59 (MAKKPGENTGKNGGIYQEVGPRGGKKDNFATVKDNERLPPTTKPGNGWVLDKRTPDSKK) form a disordered region. 2 stretches are compositionally biased toward basic and acidic residues: residues 24 to 37 (GKKDNFATVKDNER) and 50 to 59 (LDKRTPDSKK).

This is an uncharacterized protein from Salmonella phage P22 (Bacteriophage P22).